Consider the following 103-residue polypeptide: N(4)-acetylcytidine amidohydrolase (103 aa).

The region spanning 6–92 (TFFERFEQDI…VIQEIYPGLE (87 aa)) is the ASCH domain. The active-site Proton acceptor is lysine 20. Catalysis depends on threonine 23, which acts as the Nucleophile. The Proton donor role is filled by glutamate 73.

The protein belongs to the N(4)-acetylcytidine amidohydrolase family.

It carries out the reaction N(4)-acetylcytidine + H2O = cytidine + acetate + H(+). The enzyme catalyses N(4)-acetyl-2'-deoxycytidine + H2O = 2'-deoxycytidine + acetate + H(+). The catalysed reaction is N(4)-acetylcytosine + H2O = cytosine + acetate + H(+). Its function is as follows. Catalyzes the hydrolysis of N(4)-acetylcytidine (ac4C). The sequence is that of N(4)-acetylcytidine amidohydrolase from Shewanella sp. (strain MR-4).